The following is a 169-amino-acid chain: MALLPILEFPDPRLRTVAKPVTQVDDSIRQLVDDMFETMYDAPGIGLAATQVNVHKRVVVIDVSEDKSQPLVFINPEIEVLDEELSQYDEGCLSVPGFYETVERPGHIRVKALDRAGNAFELQPQGLLAVCIQHELDHLNGKLFVDHISPFKRSRIRSKLEKKHKAGVR.

Residues cysteine 92 and histidine 134 each coordinate Fe cation. Residue glutamate 135 is part of the active site. Histidine 138 lines the Fe cation pocket.

It belongs to the polypeptide deformylase family. The cofactor is Fe(2+).

It catalyses the reaction N-terminal N-formyl-L-methionyl-[peptide] + H2O = N-terminal L-methionyl-[peptide] + formate. Its function is as follows. Removes the formyl group from the N-terminal Met of newly synthesized proteins. Requires at least a dipeptide for an efficient rate of reaction. N-terminal L-methionine is a prerequisite for activity but the enzyme has broad specificity at other positions. The sequence is that of Peptide deformylase from Cellvibrio japonicus (strain Ueda107) (Pseudomonas fluorescens subsp. cellulosa).